We begin with the raw amino-acid sequence, 510 residues long: tRNA-2-methylthio-N(6)-dimethylallyladenosine synthase (510 aa).

The region spanning arginine 19–histidine 135 is the MTTase N-terminal domain. [4Fe-4S] cluster is bound by residues cysteine 28, cysteine 64, cysteine 98, cysteine 172, cysteine 176, and cysteine 179. In terms of domain architecture, Radical SAM core spans arginine 158–glutamate 394. Positions threonine 397–leucine 467 constitute a TRAM domain. The segment at aspartate 477–arginine 510 is disordered.

The protein belongs to the methylthiotransferase family. MiaB subfamily. Monomer. The cofactor is [4Fe-4S] cluster.

It is found in the cytoplasm. It carries out the reaction N(6)-dimethylallyladenosine(37) in tRNA + (sulfur carrier)-SH + AH2 + 2 S-adenosyl-L-methionine = 2-methylsulfanyl-N(6)-dimethylallyladenosine(37) in tRNA + (sulfur carrier)-H + 5'-deoxyadenosine + L-methionine + A + S-adenosyl-L-homocysteine + 2 H(+). Its function is as follows. Catalyzes the methylthiolation of N6-(dimethylallyl)adenosine (i(6)A), leading to the formation of 2-methylthio-N6-(dimethylallyl)adenosine (ms(2)i(6)A) at position 37 in tRNAs that read codons beginning with uridine. This Mycolicibacterium vanbaalenii (strain DSM 7251 / JCM 13017 / BCRC 16820 / KCTC 9966 / NRRL B-24157 / PYR-1) (Mycobacterium vanbaalenii) protein is tRNA-2-methylthio-N(6)-dimethylallyladenosine synthase.